We begin with the raw amino-acid sequence, 272 residues long: Tryptophan synthase alpha chain (272 aa).

Active-site proton acceptor residues include glutamate 49 and aspartate 60.

The protein belongs to the TrpA family. Tetramer of two alpha and two beta chains.

It catalyses the reaction (1S,2R)-1-C-(indol-3-yl)glycerol 3-phosphate + L-serine = D-glyceraldehyde 3-phosphate + L-tryptophan + H2O. It functions in the pathway amino-acid biosynthesis; L-tryptophan biosynthesis; L-tryptophan from chorismate: step 5/5. In terms of biological role, the alpha subunit is responsible for the aldol cleavage of indoleglycerol phosphate to indole and glyceraldehyde 3-phosphate. This chain is Tryptophan synthase alpha chain, found in Methylibium petroleiphilum (strain ATCC BAA-1232 / LMG 22953 / PM1).